A 526-amino-acid polypeptide reads, in one-letter code: MSESEHQNVGRSPLGFAGPLSLSMPSFDFWYSSTFWLYLFLGLWFHRYFRLLVHCVSHWTYKSKPIPSKPTFTSKDVTVVIPTIHNAFEELRPSLESILACEPAELILVTTHDKRKELQKLADSLVFPKVRVLDTPIANKRLQVCEALPKVETPITIMADDDVTWPSTLMPWILAPFEDPEIGGVGTCQRVRREHDGSWSTKAWNWLGAAYIERRNFEISATHNIDGGTSCMSGRTGAYRSEILSSHDFLHGFKNEKWRKWILNADDDNFVTRWLVSHQWKTWIQYEKECEIETTLENSTKFLYQCSRWARSNWRSNWTSMVTERYIWKQQLWCTYALHFATFTSLAFLIDPLLLASCWWGTADWDMQNRRYAFWSQFVFMFAFTKVVKLMGLFIRNPTDVMFLPVSVVFGYFHGLVKLYALITLNMTSWGSRADGDANDEQRLAPAPQPSIVLKTPPGKGSLIRYNARQKGRQTQAQQVSWEKSDYASYDSSTSYVPIRVHTPMATTPIDTKLYTNESSNTCWAI.

Residues 25 to 45 (PSFDFWYSSTFWLYLFLGLWF) form a helical membrane-spanning segment. N-linked (GlcNAc...) asparagine glycosylation is found at Asn-298 and Asn-317. 3 helical membrane passes run 340 to 360 (FATF…SCWW), 375 to 395 (WSQF…GLFI), and 403 to 423 (FLPV…YALI). N-linked (GlcNAc...) asparagine glycosylation is found at Asn-426 and Asn-517.

The protein belongs to the GT2 glycosyltransferase family.

It is found in the cell membrane. The protein localises to the secreted. The protein resides in the cell wall. In terms of biological role, glycosyltransferase involved in the maintenance of the outermost surface of the fungal cell wall. Likely functions in the synthesis of a currently unknown, potentially minor but widespread, extracellular or outer cell wall polysaccharide which plays a key role in facilitating many interactions between plants and fungi by enabling hyphal growth on solid matrices. The chain is Type 2 glycosyltransferase from Gibberella zeae (strain ATCC MYA-4620 / CBS 123657 / FGSC 9075 / NRRL 31084 / PH-1) (Wheat head blight fungus).